A 569-amino-acid chain; its full sequence is Sulfite reductase [NADPH] hemoprotein beta-component (569 aa).

Residues Cys434, Cys440, Cys479, and Cys483 each coordinate [4Fe-4S] cluster. Cys483 serves as a coordination point for siroheme.

Belongs to the nitrite and sulfite reductase 4Fe-4S domain family. Alpha(8)-beta(8). The alpha component is a flavoprotein, the beta component is a hemoprotein. The cofactor is siroheme. [4Fe-4S] cluster is required as a cofactor.

The catalysed reaction is hydrogen sulfide + 3 NADP(+) + 3 H2O = sulfite + 3 NADPH + 4 H(+). It participates in sulfur metabolism; hydrogen sulfide biosynthesis; hydrogen sulfide from sulfite (NADPH route): step 1/1. Its function is as follows. Component of the sulfite reductase complex that catalyzes the 6-electron reduction of sulfite to sulfide. This is one of several activities required for the biosynthesis of L-cysteine from sulfate. This is Sulfite reductase [NADPH] hemoprotein beta-component from Staphylococcus carnosus (strain TM300).